The primary structure comprises 1018 residues: Calcium-transporting ATPase sarcoplasmic/endoplasmic reticulum type (1018 aa).

Over 1–48 the chain is Cytoplasmic; it reads MEDGHSKTVDEVLSHFRVDPERGLSLDQVKEYQKKYGPNELPAEEGKT. A helical membrane pass occupies residues 49-69; it reads LWQLVLEQFDDLLVKILLLAA. At 70–88 the chain is on the lumenal side; sequence IISFVLALFEEHEGVEAFV. The chain crosses the membrane as a helical span at residues 89 to 109; sequence EPFVILLILIANAVVGVWQER. The Cytoplasmic portion of the chain corresponds to 110–252; it reads NAESAIEALK…EIKTPLQQKL (143 aa). The chain crosses the membrane as a helical span at residues 253–272; the sequence is DEFGEQLSKVISLICVAVWA. Over 273–294 the chain is Lumenal; that stretch reads INIGHFNDPAHGGSWIKGAVYY. A helical transmembrane segment spans residues 295-312; sequence FKIAVALAVAAIPEGLPA. 4 residues coordinate Ca(2+): valine 303, alanine 304, isoleucine 306, and glutamate 308. The Cytoplasmic portion of the chain corresponds to 313–756; that stretch reads VITTCLALGT…EEGRAIYNNM (444 aa). The active-site 4-aspartylphosphate intermediate is aspartate 350. Mg(2+) is bound by residues aspartate 702 and aspartate 706. The chain crosses the membrane as a helical span at residues 757–776; that stretch reads KQFIRYLISSNIGEVVSIFL. Ca(2+) contacts are provided by asparagine 767 and glutamate 770. Residues 777-786 are Lumenal-facing; that stretch reads TAALGLPEAL. The chain crosses the membrane as a helical span at residues 787–807; it reads IPVQLLWVNLVTDGLPATALG. Residues asparagine 795, threonine 798, and aspartate 799 each contribute to the Ca(2+) site. At 808–827 the chain is on the cytoplasmic side; the sequence is FNPPDLDIMTKPPRKADEGL. Residues 828 to 850 form a helical membrane-spanning segment; it reads ISGWLFFRYMAIGGYVGCATVGG. The Lumenal portion of the chain corresponds to 851-896; the sequence is AAWWFMFSETGPQLSYWQLTHHLSCLGGGEEFKGIDCKIFNDPHPM. Residues 897–916 form a helical membrane-spanning segment; the sequence is TMALSVLVTIEMLNAMNSLS. A Ca(2+)-binding site is contributed by glutamate 907. At 917-929 the chain is on the cytoplasmic side; sequence ENQSLVQMPPWCN. Residues 930–948 traverse the membrane as a helical segment; that stretch reads IWLIASMCLSFALHFVILY. Residues 949–963 lie on the Lumenal side of the membrane; the sequence is VDVLSTVFQVTPLDG. Residues 964–984 traverse the membrane as a helical segment; the sequence is NEWMTVMKFSLPVVLLDEILK. Topologically, residues 985–1018 are cytoplasmic; sequence FVARRISDGESYIKNMHGLVLAWAVFFAYIIWGP.

The protein belongs to the cation transport ATPase (P-type) (TC 3.A.3) family.

Its subcellular location is the endoplasmic reticulum membrane. It is found in the sarcoplasmic reticulum membrane. The enzyme catalyses Ca(2+)(in) + ATP + H2O = Ca(2+)(out) + ADP + phosphate + H(+). Functionally, this magnesium-dependent enzyme catalyzes the hydrolysis of ATP coupled with the transport of calcium. This chain is Calcium-transporting ATPase sarcoplasmic/endoplasmic reticulum type, found in Anopheles gambiae (African malaria mosquito).